We begin with the raw amino-acid sequence, 149 residues long: Calmodulin (149 aa).

Ala2 carries the post-translational modification N-acetylalanine. 4 consecutive EF-hand domains span residues 8–43, 44–79, 81–116, and 117–149; these read EQIA…LGQN, PTEA…KMKD, DSEE…LGEK, and LTDE…MMAK. 14 residues coordinate Ca(2+): Asp21, Asp23, Asp25, Cys27, Glu32, Asp57, Asp59, Asn61, Thr63, Glu68, Asp94, Asp96, Asn98, and Glu105. At Lys116 the chain carries N6,N6,N6-trimethyllysine. Residues Asp130, Asp132, Asp134, Gln136, and Glu141 each contribute to the Ca(2+) site.

The protein belongs to the calmodulin family.

Functionally, calmodulin mediates the control of a large number of enzymes, ion channels and other proteins by Ca(2+). Among the enzymes to be stimulated by the calmodulin-Ca(2+) complex are a number of protein kinases and phosphatases. The chain is Calmodulin (CALM1) from Zea mays (Maize).